The chain runs to 818 residues: FAD-dependent monooxygenase anuJ (818 aa).

5 residues coordinate FAD: Glu-46, Ala-60, Arg-122, Asp-329, and Gly-342. 3 helical membrane-spanning segments follow: residues 471–491, 539–559, and 571–591; these read VLWA…MFSV, FFYQ…IMLV, and LSFA…FVPI. N-linked (GlcNAc...) asparagine glycosylation occurs at Asn-614. 2 consecutive transmembrane segments (helical) span residues 621–641 and 647–667; these read ILPV…LSPV and AAGF…AGLA. The N-linked (GlcNAc...) asparagine glycan is linked to Asn-683. A run of 2 helical transmembrane segments spans residues 743–763 and 778–798; these read WDQV…FADL and FSAL…LMWL.

Belongs to the paxM FAD-dependent monooxygenase family.

It localises to the membrane. Functionally, highly reducing polyketide synthase; part of the gene cluster that mediates the biosynthesis of annullatin D, an alkylated aromatic polyketide with a fused dihydrobenzofuran lactone ring system that exhibits potent agonistic activities toward the cannabinoid receptors. AnuJ does not seem to play a role within the pathway. The annullatin backbone 2-hydroxymethyl-3-pentylphenol is assembled from one acetyl-CoA starter unit and 5 malonyl-CoA elongation units by cooperation of the highly reducing polyketide synthase anuA, the short-chain dehydrogenase anuB and the oxidoreductase anuC, before being hydroxylated at the C-5 alkyl chain by the cytochrome P450 monooxygenase anuE to form (8S)-annullatin E. The prenyltransferase anuH subsequently installs one isoprenyl group at the benzene ring to form (8S)-annullatin J. Enzymatic or nonenzymatic dihydro-benzofuran ring formation between the prenyl and the phenolic hydroxyl groups in (8S)-annullatin J results in two diastereomers (2S,9S)-annullatin H and compound 12. The intermediate (2S,9S)-annullatin H is then converted to (2S,9S)-annullatin D by the FAD-linked oxidoreductase anuG-catalyzed five-member lactone ring formation. The isomer 12 acts as a substrate for the short-chain dehydrogenase anuF and is oxidized to (2R)-annullatin F, which is subsequently acetylated by an acetyltransferase leading to (2R)-annullatin G formation. The remaining enzymes identified within the cluster, anuD, anuI and anuJ, seem not to be involved in annullatin biosynthesis. This is FAD-dependent monooxygenase anuJ from Penicillium roqueforti (strain FM164).